A 400-amino-acid chain; its full sequence is Putative transposase for insertion sequence element IS5376 (400 aa).

Residues 5-67 (GEFFMIKEMY…PFKPYLQKRM (63 aa)) form the HTH IS21-type domain. Residues 20-39 (ISDIARELGIDRKTVRKYIH) constitute a DNA-binding region (H-T-H motif). Residues 35–55 (RKYIHSPNPPSKSKRKQRKSK) form a disordered region. An Integrase catalytic domain is found at 113–287 (YETLPGEQMQ…SPQERWAEES (175 aa)).

Belongs to the transposase IS21/IS408/IS1162 family.

Involved in the transposition of the insertion sequence. In Geobacillus stearothermophilus (Bacillus stearothermophilus), this protein is Putative transposase for insertion sequence element IS5376.